The sequence spans 269 residues: Seven in absentia homolog 3 (269 aa).

The segment at 61-132 adopts an SIAH-type; degenerate zinc-finger fold; that stretch reads GSFHPHHLSH…VVPHLRQIHR (72 aa). The Zn(2+) site is built by Cys-107, Cys-114, His-126, and His-131.

The protein belongs to the SINA (Seven in absentia) family.

The protein localises to the mitochondrion. In terms of biological role, negative regulator of PRKN translocation to damaged mitochondria. Acts probably by destabilizing PINK1 protein, hence inhibiting PRKN targeting to dysfunctional depolarized mitochondria. This is Seven in absentia homolog 3 (SIAH3) from Homo sapiens (Human).